The primary structure comprises 381 residues: DNA primase DnaG (381 aa).

One can recognise a Toprim domain in the interval 173 to 259 (DAILVVEGRS…EVEDLEKDEI (87 aa)). Residues E179, D221, and D223 each coordinate Mg(2+).

The protein belongs to the archaeal DnaG primase family. Forms a ternary complex with MCM helicase and DNA. Component of the archaeal exosome complex. The cofactor is Mg(2+).

The catalysed reaction is ssDNA + n NTP = ssDNA/pppN(pN)n-1 hybrid + (n-1) diphosphate.. Its function is as follows. RNA polymerase that catalyzes the synthesis of short RNA molecules used as primers for DNA polymerase during DNA replication. Also part of the exosome, which is a complex involved in RNA degradation. Acts as a poly(A)-binding protein that enhances the interaction between heteromeric, adenine-rich transcripts and the exosome. The sequence is that of DNA primase DnaG from Methanothermobacter thermautotrophicus (strain ATCC 29096 / DSM 1053 / JCM 10044 / NBRC 100330 / Delta H) (Methanobacterium thermoautotrophicum).